The sequence spans 427 residues: Tol-Pal system protein TolB (427 aa).

The first 23 residues, 1–23, serve as a signal peptide directing secretion; it reads MKLIARLMSMCAVLFFAINSAYA.

The protein belongs to the TolB family. As to quaternary structure, the Tol-Pal system is composed of five core proteins: the inner membrane proteins TolA, TolQ and TolR, the periplasmic protein TolB and the outer membrane protein Pal. They form a network linking the inner and outer membranes and the peptidoglycan layer.

Its subcellular location is the periplasm. In terms of biological role, part of the Tol-Pal system, which plays a role in outer membrane invagination during cell division and is important for maintaining outer membrane integrity. The chain is Tol-Pal system protein TolB from Actinobacillus succinogenes (strain ATCC 55618 / DSM 22257 / CCUG 43843 / 130Z).